Reading from the N-terminus, the 624-residue chain is Bifunctional 3'-phosphoadenosine 5'-phosphosulfate synthase 1 (624 aa).

M1 is subject to N-acetylmethionine. The tract at residues 1-225 is adenylyl-sulfate kinase; that stretch reads MEIPGSLCKK…VVELLQERDI (225 aa). The residue at position 12 (K12) is an N6-acetyllysine. An ATP-binding site is contributed by 62–67; that stretch reads GAGKTT. Residues 89-92, F101, 106-109, 132-133, K171, and 184-185 each bind adenosine 5'-phosphosulfate; these read DNIR, REEN, IS, and GF. ATP-binding positions include C207, C212, 419-422, 521-525, and A563; these read QLRN and GRDPA. Residues 234 to 624 form a sulfate adenylyltransferase region; that stretch reads VKELYVPENK…TEYYKSLEKA (391 aa).

This sequence in the N-terminal section; belongs to the APS kinase family. The protein in the C-terminal section; belongs to the sulfate adenylyltransferase family. In terms of assembly, homodimer. As to expression, expressed in testis, pancreas, kidney, thymus, prostate, ovary, small intestine, colon, leukocytes and liver. Also expressed in high endothelial venules (HEV) cells and in cartilage.

It carries out the reaction sulfate + ATP + H(+) = adenosine 5'-phosphosulfate + diphosphate. It catalyses the reaction adenosine 5'-phosphosulfate + ATP = 3'-phosphoadenylyl sulfate + ADP + H(+). It functions in the pathway sulfur metabolism; sulfate assimilation. Its activity is regulated as follows. Inhibited by chlorate. The kinase activity is subject to inhibition by the substrate adenylyl sulfate. Its function is as follows. Bifunctional enzyme with both ATP sulfurylase and APS kinase activity, which mediates two steps in the sulfate activation pathway. The first step is the transfer of a sulfate group to ATP to yield adenosine 5'-phosphosulfate (APS), and the second step is the transfer of a phosphate group from ATP to APS yielding 3'-phosphoadenylylsulfate (PAPS: activated sulfate donor used by sulfotransferase). In mammals, PAPS is the sole source of sulfate; APS appears to be only an intermediate in the sulfate-activation pathway. Required for normal biosynthesis of sulfated L-selectin ligands in endothelial cells. The protein is Bifunctional 3'-phosphoadenosine 5'-phosphosulfate synthase 1 (PAPSS1) of Homo sapiens (Human).